Here is a 452-residue protein sequence, read N- to C-terminus: Xaa-Pro dipeptidase 1 (452 aa).

Residues Asp247, Asp258, His338, Glu383, and Glu422 each coordinate Mn(2+).

Belongs to the peptidase M24B family. Bacterial-type prolidase subfamily. It depends on Mn(2+) as a cofactor.

It carries out the reaction Xaa-L-Pro dipeptide + H2O = an L-alpha-amino acid + L-proline. Its function is as follows. Splits dipeptides with a prolyl residue in the C-terminal position. This chain is Xaa-Pro dipeptidase 1, found in Idiomarina loihiensis (strain ATCC BAA-735 / DSM 15497 / L2-TR).